The primary structure comprises 434 residues: 3-phosphoshikimate 1-carboxyvinyltransferase (434 aa).

3 residues coordinate 3-phosphoshikimate: lysine 22, serine 23, and arginine 27. Residue lysine 22 participates in phosphoenolpyruvate binding. Positions 94 and 122 each coordinate phosphoenolpyruvate. Positions 167, 169, 314, and 341 each coordinate 3-phosphoshikimate. Glutamine 169 provides a ligand contact to phosphoenolpyruvate. Aspartate 314 (proton acceptor) is an active-site residue. Residues arginine 345 and arginine 391 each coordinate phosphoenolpyruvate.

It belongs to the EPSP synthase family. In terms of assembly, monomer.

The protein resides in the cytoplasm. It catalyses the reaction 3-phosphoshikimate + phosphoenolpyruvate = 5-O-(1-carboxyvinyl)-3-phosphoshikimate + phosphate. It functions in the pathway metabolic intermediate biosynthesis; chorismate biosynthesis; chorismate from D-erythrose 4-phosphate and phosphoenolpyruvate: step 6/7. Its function is as follows. Catalyzes the transfer of the enolpyruvyl moiety of phosphoenolpyruvate (PEP) to the 5-hydroxyl of shikimate-3-phosphate (S3P) to produce enolpyruvyl shikimate-3-phosphate and inorganic phosphate. This Leuconostoc mesenteroides subsp. mesenteroides (strain ATCC 8293 / DSM 20343 / BCRC 11652 / CCM 1803 / JCM 6124 / NCDO 523 / NBRC 100496 / NCIMB 8023 / NCTC 12954 / NRRL B-1118 / 37Y) protein is 3-phosphoshikimate 1-carboxyvinyltransferase.